Here is a 187-residue protein sequence, read N- to C-terminus: Decorin-binding protein B (187 aa).

Positions 1-20 (MKIGKLNSIVMVLFFDLLVA) are cleaved as a signal peptide.

Belongs to the decorin-binding protein family.

Binds to decorin which may mediate the adherence of B.burgdorferi to collagen fibers in skin and other tissues. The sequence is that of Decorin-binding protein B (dbpB) from Borreliella burgdorferi (strain N40) (Borrelia burgdorferi).